A 36-amino-acid chain; its full sequence is Pancreatic polypeptide (36 aa).

Tyrosine amide is present on Tyr36.

The protein belongs to the NPY family.

The protein resides in the secreted. In terms of biological role, hormone secreted by pancreatic cells that acts as a regulator of pancreatic and gastrointestinal functions probably by signaling through the G protein-coupled receptor NPY4R2. The chain is Pancreatic polypeptide (PPY) from Didelphis virginiana (North American opossum).